We begin with the raw amino-acid sequence, 419 residues long: Serine hydroxymethyltransferase (419 aa).

(6S)-5,6,7,8-tetrahydrofolate is bound by residues leucine 121 and 125 to 127 (GHL). Lysine 230 is modified (N6-(pyridoxal phosphate)lysine). Residues glutamate 246 and 355–357 (SPF) contribute to the (6S)-5,6,7,8-tetrahydrofolate site.

Belongs to the SHMT family. As to quaternary structure, homodimer. Pyridoxal 5'-phosphate serves as cofactor.

The protein resides in the cytoplasm. The enzyme catalyses (6R)-5,10-methylene-5,6,7,8-tetrahydrofolate + glycine + H2O = (6S)-5,6,7,8-tetrahydrofolate + L-serine. The protein operates within one-carbon metabolism; tetrahydrofolate interconversion. It participates in amino-acid biosynthesis; glycine biosynthesis; glycine from L-serine: step 1/1. Its function is as follows. Catalyzes the reversible interconversion of serine and glycine with tetrahydrofolate (THF) serving as the one-carbon carrier. This reaction serves as the major source of one-carbon groups required for the biosynthesis of purines, thymidylate, methionine, and other important biomolecules. Also exhibits THF-independent aldolase activity toward beta-hydroxyamino acids, producing glycine and aldehydes, via a retro-aldol mechanism. In Streptococcus suis (strain 98HAH33), this protein is Serine hydroxymethyltransferase.